A 324-amino-acid chain; its full sequence is Beta-ketoacyl-[acyl-carrier-protein] synthase III (324 aa).

Catalysis depends on residues Cys114 and His246. The segment at 247–251 (QANLR) is ACP-binding. The active site involves Asn276.

Belongs to the thiolase-like superfamily. FabH family. As to quaternary structure, homodimer.

The protein localises to the cytoplasm. It carries out the reaction malonyl-[ACP] + acetyl-CoA + H(+) = 3-oxobutanoyl-[ACP] + CO2 + CoA. Its pathway is lipid metabolism; fatty acid biosynthesis. Its function is as follows. Catalyzes the condensation reaction of fatty acid synthesis by the addition to an acyl acceptor of two carbons from malonyl-ACP. Catalyzes the first condensation reaction which initiates fatty acid synthesis and may therefore play a role in governing the total rate of fatty acid production. Possesses both acetoacetyl-ACP synthase and acetyl transacylase activities. Its substrate specificity determines the biosynthesis of branched-chain and/or straight-chain of fatty acids. This is Beta-ketoacyl-[acyl-carrier-protein] synthase III from Campylobacter jejuni subsp. doylei (strain ATCC BAA-1458 / RM4099 / 269.97).